We begin with the raw amino-acid sequence, 511 residues long: Bifunctional purine biosynthesis protein PurH (511 aa).

The region spanning 1 to 145 is the MGS-like domain; the sequence is MKKRALVSVS…KNHKFVSVIV (145 aa).

This sequence belongs to the PurH family.

It catalyses the reaction (6R)-10-formyltetrahydrofolate + 5-amino-1-(5-phospho-beta-D-ribosyl)imidazole-4-carboxamide = 5-formamido-1-(5-phospho-D-ribosyl)imidazole-4-carboxamide + (6S)-5,6,7,8-tetrahydrofolate. The catalysed reaction is IMP + H2O = 5-formamido-1-(5-phospho-D-ribosyl)imidazole-4-carboxamide. It functions in the pathway purine metabolism; IMP biosynthesis via de novo pathway; 5-formamido-1-(5-phospho-D-ribosyl)imidazole-4-carboxamide from 5-amino-1-(5-phospho-D-ribosyl)imidazole-4-carboxamide (10-formyl THF route): step 1/1. Its pathway is purine metabolism; IMP biosynthesis via de novo pathway; IMP from 5-formamido-1-(5-phospho-D-ribosyl)imidazole-4-carboxamide: step 1/1. The chain is Bifunctional purine biosynthesis protein PurH from Bacillus mycoides (strain KBAB4) (Bacillus weihenstephanensis).